We begin with the raw amino-acid sequence, 482 residues long: UDP-N-acetylmuramoyl-L-alanyl-D-glutamate--2,6-diaminopimelate ligase (482 aa).

Residue S29 coordinates UDP-N-acetyl-alpha-D-muramoyl-L-alanyl-D-glutamate. An ATP-binding site is contributed by 109–115 (GTNGKTS). Residues 151-152 (TT), S178, and R186 each bind UDP-N-acetyl-alpha-D-muramoyl-L-alanyl-D-glutamate. At K218 the chain carries N6-carboxylysine. Meso-2,6-diaminopimelate contacts are provided by residues R375, 399-402 (DNPR), G451, and E455. The short motif at 399 to 402 (DNPR) is the Meso-diaminopimelate recognition motif element.

Belongs to the MurCDEF family. MurE subfamily. Mg(2+) is required as a cofactor. Carboxylation is probably crucial for Mg(2+) binding and, consequently, for the gamma-phosphate positioning of ATP.

Its subcellular location is the cytoplasm. The enzyme catalyses UDP-N-acetyl-alpha-D-muramoyl-L-alanyl-D-glutamate + meso-2,6-diaminopimelate + ATP = UDP-N-acetyl-alpha-D-muramoyl-L-alanyl-gamma-D-glutamyl-meso-2,6-diaminopimelate + ADP + phosphate + H(+). It participates in cell wall biogenesis; peptidoglycan biosynthesis. Catalyzes the addition of meso-diaminopimelic acid to the nucleotide precursor UDP-N-acetylmuramoyl-L-alanyl-D-glutamate (UMAG) in the biosynthesis of bacterial cell-wall peptidoglycan. The polypeptide is UDP-N-acetylmuramoyl-L-alanyl-D-glutamate--2,6-diaminopimelate ligase (Caldanaerobacter subterraneus subsp. tengcongensis (strain DSM 15242 / JCM 11007 / NBRC 100824 / MB4) (Thermoanaerobacter tengcongensis)).